Reading from the N-terminus, the 612-residue chain is Peroxisomal carnitine O-octanoyltransferase (612 aa).

M1 carries the post-translational modification N-acetylmethionine. 2 positions are modified to N6-succinyllysine: K40 and K57. H327 (proton acceptor) is an active-site residue. Residues K406 and 410–417 (KKEALHPD) each bind CoA. N6-acetyllysine; alternate is present on K406. K406 bears the N6-succinyllysine; alternate mark. Residues Y439, T441, and T452 each contribute to the (R)-carnitine site. The short motif at 610-612 (AHL) is the Microbody targeting signal element.

Belongs to the carnitine/choline acetyltransferase family. In terms of tissue distribution, liver.

It localises to the peroxisome. It carries out the reaction octanoyl-CoA + (R)-carnitine = O-octanoyl-(R)-carnitine + CoA. The enzyme catalyses 4,8-dimethylnonanoyl-CoA + (R)-carnitine = O-4,8-dimethylnonanoyl-(R)-carnitine + CoA. It participates in lipid metabolism; fatty acid beta-oxidation. In terms of biological role, beta-oxidation of fatty acids. The highest activity concerns the C6 to C10 chain length substrate. This chain is Peroxisomal carnitine O-octanoyltransferase (Crot), found in Rattus norvegicus (Rat).